The sequence spans 360 residues: Phosphoserine aminotransferase (360 aa).

Arg42 serves as a coordination point for L-glutamate. Pyridoxal 5'-phosphate contacts are provided by residues Ala76–Arg77, Trp102, Thr153, Asp172, and Gln195. Lys196 is subject to N6-(pyridoxal phosphate)lysine. Asn237 to Thr238 is a binding site for pyridoxal 5'-phosphate.

It belongs to the class-V pyridoxal-phosphate-dependent aminotransferase family. SerC subfamily. In terms of assembly, homodimer. It depends on pyridoxal 5'-phosphate as a cofactor.

It is found in the cytoplasm. It carries out the reaction O-phospho-L-serine + 2-oxoglutarate = 3-phosphooxypyruvate + L-glutamate. The enzyme catalyses 4-(phosphooxy)-L-threonine + 2-oxoglutarate = (R)-3-hydroxy-2-oxo-4-phosphooxybutanoate + L-glutamate. It functions in the pathway amino-acid biosynthesis; L-serine biosynthesis; L-serine from 3-phospho-D-glycerate: step 2/3. The protein operates within cofactor biosynthesis; pyridoxine 5'-phosphate biosynthesis; pyridoxine 5'-phosphate from D-erythrose 4-phosphate: step 3/5. Catalyzes the reversible conversion of 3-phosphohydroxypyruvate to phosphoserine and of 3-hydroxy-2-oxo-4-phosphonooxybutanoate to phosphohydroxythreonine. This is Phosphoserine aminotransferase from Aliivibrio fischeri (strain ATCC 700601 / ES114) (Vibrio fischeri).